We begin with the raw amino-acid sequence, 343 residues long: Dihydroorotase (343 aa).

Residues His14 and His16 each coordinate Zn(2+). Residues 16–18 (HLR) and Asn42 contribute to the substrate site. Positions 99, 136, and 174 each coordinate Zn(2+). Lys99 is modified (N6-carboxylysine). Substrate is bound at residue His136. Leu219 serves as a coordination point for substrate. Asp247 is a binding site for Zn(2+). Asp247 is an active-site residue. 2 residues coordinate substrate: His251 and Ala263.

This sequence belongs to the metallo-dependent hydrolases superfamily. DHOase family. Class II DHOase subfamily. As to quaternary structure, homodimer. Requires Zn(2+) as cofactor.

The catalysed reaction is (S)-dihydroorotate + H2O = N-carbamoyl-L-aspartate + H(+). It participates in pyrimidine metabolism; UMP biosynthesis via de novo pathway; (S)-dihydroorotate from bicarbonate: step 3/3. Catalyzes the reversible cyclization of carbamoyl aspartate to dihydroorotate. The chain is Dihydroorotase from Psychromonas ingrahamii (strain DSM 17664 / CCUG 51855 / 37).